A 222-amino-acid chain; its full sequence is Sperm acrosome-associated protein 9 (222 aa).

The tract at residues 164–222 is disordered; the sequence is QHVSEPQAHQESTRGAARPAQAIGTQPRATKHKCRQLTKASLKPRGCSKPPWRPPGGKL.

Microtubule inner protein component of sperm flagellar doublet microtubules. Interacts with CABP1 and CALR. Interacts with INCA1. Interacts with microtubules.

It localises to the cytoplasm. It is found in the cytoplasmic vesicle. The protein localises to the secretory vesicle. Its subcellular location is the acrosome. The protein resides in the cytoskeleton. It localises to the cilium basal body. It is found in the flagellum axoneme. The protein localises to the cilium axoneme. Its subcellular location is the nucleus. Functionally, microtubule inner protein (MIP) part of the dynein-decorated doublet microtubules (DMTs) of multiciliated respiratory cells and the distal singlet microtubules of monoflagellated spermatozoa. Forms an extensive interaction network cross-linking the lumen of axonemal doublet microtubules. This chain is Sperm acrosome-associated protein 9, found in Homo sapiens (Human).